A 358-amino-acid polypeptide reads, in one-letter code: L-lysine 3-hydroxylase (358 aa).

Positions 178, 180, and 314 each coordinate Fe cation. Arginine 328 contacts 2-oxoglutarate.

The protein belongs to the clavaminate synthase family. The cofactor is Fe(2+).

The enzyme catalyses L-lysine + 2-oxoglutarate + O2 = (3S)-3-hydroxy-L-lysine + succinate + CO2. Its function is as follows. Alpha-ketoglutarate-dependent dioxygenase that in vitro catalyzes the regio- and stereoselective hydroxylation of L-lysine, leading to (3S)-3-hydroxy-L-lysine. Can also use (5R)-5-hydroxy-L-lysine as substrate, but neither D-lysine nor L-ornithine. This chain is L-lysine 3-hydroxylase, found in Catenulispora acidiphila (strain DSM 44928 / JCM 14897 / NBRC 102108 / NRRL B-24433 / ID139908).